The sequence spans 468 residues: Glycine--tRNA ligase (468 aa).

Arg101 and Glu170 together coordinate substrate. ATP is bound by residues 202–204, 212–217, 289–290, and 333–336; these read RNE, FRTREF, EL, and GLTR. Residue 217–221 coordinates substrate; it reads FEQME. Position 329 to 333 (329 to 333) interacts with substrate; sequence EPAAG.

It belongs to the class-II aminoacyl-tRNA synthetase family. In terms of assembly, homodimer.

The protein localises to the cytoplasm. The enzyme catalyses tRNA(Gly) + glycine + ATP = glycyl-tRNA(Gly) + AMP + diphosphate. Functionally, catalyzes the attachment of glycine to tRNA(Gly). In Mycolicibacterium vanbaalenii (strain DSM 7251 / JCM 13017 / BCRC 16820 / KCTC 9966 / NRRL B-24157 / PYR-1) (Mycobacterium vanbaalenii), this protein is Glycine--tRNA ligase.